We begin with the raw amino-acid sequence, 874 residues long: Alanine--tRNA ligase (874 aa).

Zn(2+) contacts are provided by His-563, His-567, Cys-665, and His-669.

It belongs to the class-II aminoacyl-tRNA synthetase family. It depends on Zn(2+) as a cofactor.

It is found in the cytoplasm. It carries out the reaction tRNA(Ala) + L-alanine + ATP = L-alanyl-tRNA(Ala) + AMP + diphosphate. Catalyzes the attachment of alanine to tRNA(Ala) in a two-step reaction: alanine is first activated by ATP to form Ala-AMP and then transferred to the acceptor end of tRNA(Ala). Also edits incorrectly charged Ser-tRNA(Ala) and Gly-tRNA(Ala) via its editing domain. The sequence is that of Alanine--tRNA ligase from Aeromonas salmonicida (strain A449).